Reading from the N-terminus, the 455-residue chain is Ribulose bisphosphate carboxylase large chain (455 aa).

The residue at position 5 (Lys-5) is an N6,N6,N6-trimethyllysine. Substrate contacts are provided by Asn-114 and Thr-164. Lys-166 acts as the Proton acceptor in catalysis. Substrate is bound at residue Lys-168. Mg(2+) contacts are provided by Lys-192, Asp-194, and Glu-195. At Lys-192 the chain carries N6-carboxylysine. Residue His-285 is the Proton acceptor of the active site. The substrate site is built by Arg-286, His-318, and Ser-370.

Belongs to the RuBisCO large chain family. Type I subfamily. As to quaternary structure, heterohexadecamer of 8 large chains and 8 small chains; disulfide-linked. The disulfide link is formed within the large subunit homodimers. It depends on Mg(2+) as a cofactor. The disulfide bond which can form in the large chain dimeric partners within the hexadecamer appears to be associated with oxidative stress and protein turnover.

It localises to the plastid. The protein localises to the chloroplast. The enzyme catalyses 2 (2R)-3-phosphoglycerate + 2 H(+) = D-ribulose 1,5-bisphosphate + CO2 + H2O. It carries out the reaction D-ribulose 1,5-bisphosphate + O2 = 2-phosphoglycolate + (2R)-3-phosphoglycerate + 2 H(+). RuBisCO catalyzes two reactions: the carboxylation of D-ribulose 1,5-bisphosphate, the primary event in carbon dioxide fixation, as well as the oxidative fragmentation of the pentose substrate in the photorespiration process. Both reactions occur simultaneously and in competition at the same active site. The polypeptide is Ribulose bisphosphate carboxylase large chain (Lupinus microcarpus var. densiflorus (Whitewhorl lupine)).